The sequence spans 549 residues: Cation/acetate symporter ActP (549 aa).

The next 13 helical transmembrane spans lie at 33–53 (WQAIIMFLIFVVFTLGITYWA), 77–97 (LAIAGDYMSAASFLGISALVF), 103–123 (GLIYSLGFLVGWPIILFLIAE), 148–168 (ILSACGSLVVVALYLIAQMVG), 183–203 (IAVVLVGVLMMMYVLFGGMLA), 206–226 (WVQIIKAVLLLFGASFMAFMV), 262–282 (ISALSLGLGLMFGTAGLPHIL), 303–323 (GFMGYFYILTFIIGFGAIMLV), 355–375 (LFLGFISAVAFATILAVVAGL), 404–424 (VSKITVLVLGVIAIILGVLFE), 428–448 (IAFMVGLAFAIAASCNFPIIL), 464–484 (GGWLGLLTAVVLMILGPTIWV), and 493–513 (IFPYEYPALFSISVAFLGIWF).

This sequence belongs to the sodium:solute symporter (SSF) (TC 2.A.21) family.

Its subcellular location is the cell inner membrane. Transports acetate. This is Cation/acetate symporter ActP from Salmonella gallinarum (strain 287/91 / NCTC 13346).